The primary structure comprises 212 residues: Ropporin-1A (212 aa).

In terms of domain architecture, RIIa spans 12-49 (PELPKMLKEFAKAAIRVQPQDLIQWAADYFEALSRGET). Ser56 is modified (phosphoserine). Positions 209–212 (VQLE) are interaction with RHPN1.

Belongs to the ropporin family. Homodimer. Interacts with AKAP3 and RHPN1. May interact with SPA17. Interacts with FSCB; the interaction increases upon spermatozoa capacitation conditions. Interacts with CFAP61. In terms of processing, sumoylated, sumoylation decreases upon spermatozoa capacitation conditions. In terms of tissue distribution, testis specific in adult. Overexpressed in hematologic tumor cells.

It is found in the cell projection. Its subcellular location is the cilium. The protein resides in the flagellum. In terms of biological role, important for male fertility. With ROPN1L, involved in fibrous sheath integrity and sperm motility, plays a role in PKA-dependent signaling processes required for spermatozoa capacitation. This Homo sapiens (Human) protein is Ropporin-1A (ROPN1).